Reading from the N-terminus, the 419-residue chain is WD repeat-containing protein JIP5 (419 aa).

WD repeat units follow at residues 4-45, 66-105, 108-147, 180-220, 224-263, 268-308, and 351-390; these read ALSS…HNQS, PSHK…VKAR, RAHE…EGDA, DQED…KGVE, DQED…LDHA, GHPS…GIVG, and DAAE…QPPP. The interval 172-192 is disordered; it reads DPPRSKKKDQEDDLKRKRDEE. The tract at residues 372 to 408 is disordered; the sequence is SADGSDESAGESDVMQPPPATKRRTAKSKAGKKSVHD. The span at 392-404 shows a compositional bias: basic residues; the sequence is TKRRTAKSKAGKK.

The protein belongs to the WD repeat WDR55 family.

The protein localises to the nucleus. It localises to the nucleolus. This Malassezia globosa (strain ATCC MYA-4612 / CBS 7966) (Dandruff-associated fungus) protein is WD repeat-containing protein JIP5 (JIP5).